The sequence spans 318 residues: Transaldolase (318 aa).

The active-site Schiff-base intermediate with substrate is the Lys132.

It belongs to the transaldolase family. Type 1 subfamily. In terms of assembly, homodimer.

It is found in the cytoplasm. It carries out the reaction D-sedoheptulose 7-phosphate + D-glyceraldehyde 3-phosphate = D-erythrose 4-phosphate + beta-D-fructose 6-phosphate. The protein operates within carbohydrate degradation; pentose phosphate pathway; D-glyceraldehyde 3-phosphate and beta-D-fructose 6-phosphate from D-ribose 5-phosphate and D-xylulose 5-phosphate (non-oxidative stage): step 2/3. Functionally, transaldolase is important for the balance of metabolites in the pentose-phosphate pathway. This chain is Transaldolase, found in Shewanella sp. (strain MR-4).